The primary structure comprises 197 residues: Recombination protein RecR (197 aa).

The C4-type zinc-finger motif lies at 56 to 71 (CVRCFSLTDAETCNFC). The 96-residue stretch at 79 to 174 (RVLCVVETFA…RVTRIAQGLP (96 aa)) folds into the Toprim domain.

The protein belongs to the RecR family.

Its function is as follows. May play a role in DNA repair. It seems to be involved in an RecBC-independent recombinational process of DNA repair. It may act with RecF and RecO. In Myxococcus xanthus (strain DK1622), this protein is Recombination protein RecR.